We begin with the raw amino-acid sequence, 486 residues long: UDP-N-acetylmuramate--L-alanine ligase (486 aa).

An ATP-binding site is contributed by 132–138 (GTHGKTT).

The protein belongs to the MurCDEF family.

The protein localises to the cytoplasm. The catalysed reaction is UDP-N-acetyl-alpha-D-muramate + L-alanine + ATP = UDP-N-acetyl-alpha-D-muramoyl-L-alanine + ADP + phosphate + H(+). The protein operates within cell wall biogenesis; peptidoglycan biosynthesis. Cell wall formation. The protein is UDP-N-acetylmuramate--L-alanine ligase of Halorhodospira halophila (strain DSM 244 / SL1) (Ectothiorhodospira halophila (strain DSM 244 / SL1)).